The chain runs to 121 residues: Large ribosomal subunit protein uL14c (121 aa).

It belongs to the universal ribosomal protein uL14 family. In terms of assembly, part of the 50S ribosomal subunit.

It localises to the plastid. The protein resides in the apicoplast. Functionally, binds to 23S rRNA. In Toxoplasma gondii, this protein is Large ribosomal subunit protein uL14c (rpl14).